Consider the following 585-residue polypeptide: MAAVELEWIPETLYNTAISAVVDNYIRSRRDIRSLPENIQFDVYYKLYQQGRLCQLGSEFCELEVFAKVLRALDKRHLLHHCFQALMDHGVKVASVLAYSFSRRCSYIAESDAAVKEKAIQVGFVLGGFLSDAGWYSDAEKVFLSCLQLCTLHDEMLHWFRAVECCVRLLHVRNGNCKYHLGEETFKLAQTYMDKLSKHGQQANRAALYGELCALLFAKSHYDEAYKWCVEAMKEITAGLPVKVVVDVLRQASKACVVKREFKKAEQLIKHAVYLARDHFGSKHPKYSDTLLDYGFYLLNVDNICQSVAIYQAALDIRQSVFGGKNIHVATAHEDLAYSSYVHQYSSGKFDNALFHAERAIGIITHILPEDHLLLASSKRVKALILEEIAIDCHNKETEQRLLQEAHDLHLSSLQLAKKAFGEFNVQTAKHYGNLGRLYQSMRKFKEAEEMHIKAIQIKEQLLGQEDYEVALSVGHLASLYNYDMNQYENAEKLYLRSIAIGKKLFGEGYSGLEYDYRGLIKLYNSIGNYEKVFEYHNVLSNWNRLRDRQYSVTDALEDVSSSPQSTEEVVQSFLMAQNVEGPSC.

TPR repeat units lie at residues 50-83, 120-153, 206-239, 288-321, 333-367, 429-462, 471-505, and 514-547; these read QGRL…HHCF, IQVG…CTLH, AALY…ITAG, SDTL…RQSV, HEDL…ITHI, AKHY…KEQL, ALSV…GKKL, and EYDY…NRLR.

As to quaternary structure, component of a CRL2 E3 ubiquitin-protein ligase complex, also named ECS (Elongin BC-CUL2/5-SOCS-box protein) complex, composed of CUL2, Elongin BC (ELOB and ELOC), RBX1 and substrate-specific adapter APPBP2. Interacts with APP; APP interaction inhibits the E3 ubiquitin-protein ligase activity of the CRL2(APPBP2) complex. In terms of processing, rapidly degraded by the proteasome upon overexpression of a C-terminal fragment of APP.

It localises to the nucleus. It is found in the cytoplasm. The protein localises to the cytoskeleton. The protein resides in the membrane. Its pathway is protein modification; protein ubiquitination. Its activity is regulated as follows. E3 ubiquitin-protein ligase activity of the CRL2(APPBP2) complex is inhibited by APP. In terms of biological role, substrate-recognition component of a Cul2-RING (CRL2) E3 ubiquitin-protein ligase complex of the DesCEND (destruction via C-end degrons) pathway, which recognizes a C-degron located at the extreme C terminus of target proteins, leading to their ubiquitination and degradation. The C-degron recognized by the DesCEND pathway is usually a motif of less than ten residues and can be present in full-length proteins, truncated proteins or proteolytically cleaved forms. The CRL2(APPBP2) complex specifically recognizes proteins with a -Arg-Xaa-Xaa-Gly degron at the C-terminus, leading to their ubiquitination and degradation. The CRL2(APPBP2) complex mediates ubiquitination and degradation of truncated SELENOV selenoproteins produced by failed UGA/Sec decoding, which end with a -Arg-Xaa-Xaa-Gly degron. May play a role in intracellular protein transport: may be involved in the translocation of APP along microtubules toward the cell surface. The chain is Amyloid protein-binding protein 2 from Mus musculus (Mouse).